A 416-amino-acid chain; its full sequence is Gamma-glutamyl phosphate reductase (416 aa).

This sequence belongs to the gamma-glutamyl phosphate reductase family.

The protein localises to the cytoplasm. It carries out the reaction L-glutamate 5-semialdehyde + phosphate + NADP(+) = L-glutamyl 5-phosphate + NADPH + H(+). The protein operates within amino-acid biosynthesis; L-proline biosynthesis; L-glutamate 5-semialdehyde from L-glutamate: step 2/2. Its function is as follows. Catalyzes the NADPH-dependent reduction of L-glutamate 5-phosphate into L-glutamate 5-semialdehyde and phosphate. The product spontaneously undergoes cyclization to form 1-pyrroline-5-carboxylate. In Streptococcus thermophilus (strain ATCC BAA-491 / LMD-9), this protein is Gamma-glutamyl phosphate reductase.